The following is a 467-amino-acid chain: MKQFMDEDFLLSNDVARTLYFDYAKDQPIFDYHCHLPPKEIAENRLFKDLTEIWLAGDHYKWRAMRSAGFDENVITGNASAYEKYQAWAKTVPLCIGNPIYHWTHLELRRPFGITDTLFGPQSADKIWQECNELLQQPEFSARGIMRRMNVKFSGTTDDPIDSLEYHKAIAEDNAFDIEVAPSWRPDKAVKIELDQFNDYLEQLERVSDTDINSFDALKKALLKRLEHFDQHGCKSADHGMEIVRFAPIPDEKELDRILRLRRSNQALTELQINQYSTALLVWLGTEYCKRNWAMQMHIGALRNNNTRMFKLLGADAGFDSIADRTFAEPLSRLLDTMDQNDELPKTILYCLNPRDNEMIATMIGNFQTGGVAGKIQFGSGWWFNDQKDGMERQLQQLSQLGLLSQFVGMLTDSRSFLSYTRHEYFRRILCEMVGKWVVNGEAPNDMNLLGNMVKNICYNNAKSYFK.

It belongs to the metallo-dependent hydrolases superfamily. Uronate isomerase family.

The catalysed reaction is D-glucuronate = D-fructuronate. It carries out the reaction aldehydo-D-galacturonate = keto-D-tagaturonate. Its pathway is carbohydrate metabolism; pentose and glucuronate interconversion. The protein is Uronate isomerase of Actinobacillus succinogenes (strain ATCC 55618 / DSM 22257 / CCUG 43843 / 130Z).